A 488-amino-acid polypeptide reads, in one-letter code: Spermatogenesis-associated protein 6 (488 aa).

The signal sequence occupies residues 1–17 (MPKVKALQCALALEIRS). The disordered stretch occupies residues 176-225 (HGRLQCRTSRSQKKKSKSPERSKYCINTKNYEQPTISSKSHSPSPYTKRR). The span at 200–220 (CINTKNYEQPTISSKSHSPSP) shows a compositional bias: polar residues. Phosphoserine is present on residues serine 217 and serine 219. Residue lysine 248 forms a Glycyl lysine isopeptide (Lys-Gly) (interchain with G-Cter in SUMO2) linkage. Serine 265, serine 274, serine 325, serine 343, serine 346, serine 354, serine 424, serine 465, and serine 487 each carry phosphoserine.

The protein belongs to the SPATA6 family. In terms of assembly, interacts with MYL6. In terms of tissue distribution, specifically expressed in developing spermatids and mature spermatozoa (at protein level). Isoform 1 is weakly expressed in testis, ovary, thymus and placenta. Isoform 2 and isoform 3 are testis-specific. Expression isw higher in spermatids than in spermatocytes and spermatogonia.

Its subcellular location is the secreted. The protein resides in the cell projection. The protein localises to the cilium. It is found in the flagellum. In terms of biological role, required for formation of the sperm connecting piece during spermiogenesis. Sperm connecting piece is essential for linking the developing flagellum to the head during late spermiogenesis. May be involved in myosin-based microfilament transport through interaction with myosin subunits. The protein is Spermatogenesis-associated protein 6 of Mus musculus (Mouse).